Reading from the N-terminus, the 690-residue chain is UvrABC system protein B (690 aa).

Residues 30–188 (QGVMDGQTNQ…QELISLHFVR (159 aa)) enclose the Helicase ATP-binding domain. 43-50 (GVTGSGKT) provides a ligand contact to ATP. A Beta-hairpin motif is present at residues 96–119 (YYDFYQPEAYIPTMDKYIAKDLKI). A Helicase C-terminal domain is found at 435–601 (QIDDLLEEIR…SIVKSVDQVL (167 aa)). One can recognise a UVR domain in the interval 641–676 (YAMAEELRLEMQEAAESMEFEKAAYLRDEVTKLEDA).

The protein belongs to the UvrB family. In terms of assembly, forms a heterotetramer with UvrA during the search for lesions. Interacts with UvrC in an incision complex.

The protein localises to the cytoplasm. Functionally, the UvrABC repair system catalyzes the recognition and processing of DNA lesions. A damage recognition complex composed of 2 UvrA and 2 UvrB subunits scans DNA for abnormalities. Upon binding of the UvrA(2)B(2) complex to a putative damaged site, the DNA wraps around one UvrB monomer. DNA wrap is dependent on ATP binding by UvrB and probably causes local melting of the DNA helix, facilitating insertion of UvrB beta-hairpin between the DNA strands. Then UvrB probes one DNA strand for the presence of a lesion. If a lesion is found the UvrA subunits dissociate and the UvrB-DNA preincision complex is formed. This complex is subsequently bound by UvrC and the second UvrB is released. If no lesion is found, the DNA wraps around the other UvrB subunit that will check the other stand for damage. The chain is UvrABC system protein B from Chlorobium phaeobacteroides (strain BS1).